A 714-amino-acid polypeptide reads, in one-letter code: Nuclear protein MDM1 (714 aa).

The ST]-E-Y-X(3)-F motif 1; required for efficient microtubule binding and stabilization signature appears at 9–15 (SEYQRNF). Positions 79–152 (NVVASPEPEA…HTPVNENVEL (74 aa)) are disordered. The residue at position 83 (S83) is a Phosphoserine. Residues 93 to 111 (KSQEAEQKDVTQERVHSLE) are compositionally biased toward basic and acidic residues. Phosphoserine is present on residues S123 and S126. The span at 138–147 (EGVTNHTPVN) shows a compositional bias: polar residues. Residues 189–195 (SEYQRQF) carry the ST]-E-Y-X(3)-F motif 2; required for efficient microtubule binding and stabilization motif. The short motif at 232 to 238 (TEYKRNF) is the ST]-E-Y-X(3)-F motif 3; required for efficient microtubule binding and stabilization element. 2 positions are modified to phosphoserine: S242 and S263. An ST]-E-Y-X(3)-F motif 4; required for efficient microtubule binding and stabilization motif is present at residues 306 to 312 (SEYRAKF). Position 314 is a phosphoserine (S314). Residues 391–571 (DLAGDPTSHK…DCLETSKNDF (181 aa)) form a disordered region. Residues 460–469 (KEEEDDNEEE) are compositionally biased toward acidic residues. Basic and acidic residues predominate over residues 482–501 (EQEKLDVREKSKADKMKEGS). A phosphoserine mark is found at S560 and S584. The segment at 616–637 (SKIPKYPTNPPGQLPSPPHVPS) is disordered. Positions 622 to 635 (PTNPPGQLPSPPHV) are enriched in pro residues. Position 648 is a phosphoserine (S648).

Belongs to the MDM1 family.

It localises to the nucleus. The protein resides in the cytoplasm. Its subcellular location is the cytoskeleton. It is found in the microtubule organizing center. The protein localises to the centrosome. It localises to the centriole. Its function is as follows. Microtubule-binding protein that negatively regulates centriole duplication. Binds to and stabilizes microtubules. This chain is Nuclear protein MDM1 (MDM1), found in Homo sapiens (Human).